Here is a 251-residue protein sequence, read N- to C-terminus: Triosephosphate isomerase (251 aa).

Residue 9-11 (NWK) participates in substrate binding. H94 serves as the catalytic Electrophile. E166 serves as the catalytic Proton acceptor. Substrate is bound by residues G172, S211, and 232–233 (GG).

It belongs to the triosephosphate isomerase family. Homodimer.

It localises to the cytoplasm. The enzyme catalyses D-glyceraldehyde 3-phosphate = dihydroxyacetone phosphate. The protein operates within carbohydrate biosynthesis; gluconeogenesis. It participates in carbohydrate degradation; glycolysis; D-glyceraldehyde 3-phosphate from glycerone phosphate: step 1/1. In terms of biological role, involved in the gluconeogenesis. Catalyzes stereospecifically the conversion of dihydroxyacetone phosphate (DHAP) to D-glyceraldehyde-3-phosphate (G3P). This chain is Triosephosphate isomerase, found in Xanthomonas oryzae pv. oryzae (strain MAFF 311018).